The chain runs to 433 residues: 5-methylthioadenosine/S-adenosylhomocysteine deaminase (433 aa).

2 residues coordinate Zn(2+): histidine 62 and histidine 64. The substrate site is built by glutamate 91, arginine 143, and histidine 183. Histidine 210 contacts Zn(2+). Substrate contacts are provided by glutamate 213 and aspartate 298. Residue aspartate 298 participates in Zn(2+) binding.

Belongs to the metallo-dependent hydrolases superfamily. MTA/SAH deaminase family. Zn(2+) is required as a cofactor.

The enzyme catalyses S-adenosyl-L-homocysteine + H2O + H(+) = S-inosyl-L-homocysteine + NH4(+). It catalyses the reaction S-methyl-5'-thioadenosine + H2O + H(+) = S-methyl-5'-thioinosine + NH4(+). Functionally, catalyzes the deamination of 5-methylthioadenosine and S-adenosyl-L-homocysteine into 5-methylthioinosine and S-inosyl-L-homocysteine, respectively. Is also able to deaminate adenosine. The sequence is that of 5-methylthioadenosine/S-adenosylhomocysteine deaminase from Caldanaerobacter subterraneus subsp. tengcongensis (strain DSM 15242 / JCM 11007 / NBRC 100824 / MB4) (Thermoanaerobacter tengcongensis).